A 363-amino-acid polypeptide reads, in one-letter code: 3-isopropylmalate dehydrogenase (363 aa).

78-91 (GKKWDYLPIESRPE) lines the NAD(+) pocket. 4 residues coordinate substrate: Arg99, Arg109, Arg138, and Asp227. 3 residues coordinate Mg(2+): Asp227, Asp251, and Asp255. NAD(+) is bound at residue 285 to 297 (GSAPDIEGKNIAN).

Belongs to the isocitrate and isopropylmalate dehydrogenases family. LeuB type 1 subfamily. As to quaternary structure, homodimer. Requires Mg(2+) as cofactor. The cofactor is Mn(2+).

It is found in the cytoplasm. It catalyses the reaction (2R,3S)-3-isopropylmalate + NAD(+) = 4-methyl-2-oxopentanoate + CO2 + NADH. Its pathway is amino-acid biosynthesis; L-leucine biosynthesis; L-leucine from 3-methyl-2-oxobutanoate: step 3/4. Functionally, catalyzes the oxidation of 3-carboxy-2-hydroxy-4-methylpentanoate (3-isopropylmalate) to 3-carboxy-4-methyl-2-oxopentanoate. The product decarboxylates to 4-methyl-2 oxopentanoate. The sequence is that of 3-isopropylmalate dehydrogenase from Buchnera aphidicola subsp. Schizaphis graminum (strain Sg).